The chain runs to 860 residues: DNA mismatch repair protein MutS (860 aa).

ATP is bound at residue 618–625; that stretch reads GPNMGGKS.

It belongs to the DNA mismatch repair MutS family.

Functionally, this protein is involved in the repair of mismatches in DNA. It is possible that it carries out the mismatch recognition step. This protein has a weak ATPase activity. This chain is DNA mismatch repair protein MutS, found in Shewanella piezotolerans (strain WP3 / JCM 13877).